The chain runs to 158 residues: Endoribonuclease YbeY (158 aa).

Positions 119, 123, and 129 each coordinate Zn(2+).

Belongs to the endoribonuclease YbeY family. Requires Zn(2+) as cofactor.

The protein resides in the cytoplasm. Functionally, single strand-specific metallo-endoribonuclease involved in late-stage 70S ribosome quality control and in maturation of the 3' terminus of the 16S rRNA. The polypeptide is Endoribonuclease YbeY (Acinetobacter baumannii (strain SDF)).